Reading from the N-terminus, the 328-residue chain is Tetraacyldisaccharide 4'-kinase (328 aa).

55-62 (TAGGNGKT) lines the ATP pocket.

Belongs to the LpxK family.

It carries out the reaction a lipid A disaccharide + ATP = a lipid IVA + ADP + H(+). Its pathway is glycolipid biosynthesis; lipid IV(A) biosynthesis; lipid IV(A) from (3R)-3-hydroxytetradecanoyl-[acyl-carrier-protein] and UDP-N-acetyl-alpha-D-glucosamine: step 6/6. Functionally, transfers the gamma-phosphate of ATP to the 4'-position of a tetraacyldisaccharide 1-phosphate intermediate (termed DS-1-P) to form tetraacyldisaccharide 1,4'-bis-phosphate (lipid IVA). This Shigella dysenteriae serotype 1 (strain Sd197) protein is Tetraacyldisaccharide 4'-kinase.